Here is a 410-residue protein sequence, read N- to C-terminus: Exopolygalacturonase (410 aa).

Positions 1–22 are cleaved as a signal peptide; the sequence is MACIDNAMRALFLLALFCVVHG. N-linked (GlcNAc...) asparagine glycans are attached at residues Asn89 and Asn201. PbH1 repeat units follow at residues 192 to 218, 219 to 240, 242 to 262, 272 to 293, and 337 to 377; these read CKDMLIKDVNVTAPGDSPNTDGIHMGD, SSGVTITNTVIGVGDDCISIGP, TSKVNITGVTCGPGHGISIGS, VTDINVKDCTLKKTANGVRIKA, and ASKV…TMDD. Asp233 serves as the catalytic Proton donor. Cys235 and Cys252 are disulfide-bonded. The N-linked (GlcNAc...) asparagine glycan is linked to Asn246. His256 is a catalytic residue. Asn349 carries N-linked (GlcNAc...) asparagine glycosylation. Cys364 and Cys370 are disulfide-bonded. N-linked (GlcNAc...) asparagine glycosylation occurs at Asn387. An intrachain disulfide couples Cys393 to Cys409.

Belongs to the glycosyl hydrolase 28 family. In terms of tissue distribution, pollen.

It localises to the secreted. The protein resides in the cell wall. The enzyme catalyses [(1-&gt;4)-alpha-D-galacturonosyl](n) + H2O = alpha-D-galacturonate + [(1-&gt;4)-alpha-D-galacturonosyl](n-1). In terms of biological role, may function in depolymerizing pectin during pollen development, germination, and tube growth. Acts as an exo-polygalacturonase. The chain is Exopolygalacturonase (PG2C) from Zea mays (Maize).